We begin with the raw amino-acid sequence, 130 residues long: Small ribosomal subunit protein uS8 (130 aa).

The protein belongs to the universal ribosomal protein uS8 family. Part of the 30S ribosomal subunit. Contacts proteins S5 and S12.

One of the primary rRNA binding proteins, it binds directly to 16S rRNA central domain where it helps coordinate assembly of the platform of the 30S subunit. This is Small ribosomal subunit protein uS8 from Histophilus somni (strain 129Pt) (Haemophilus somnus).